The primary structure comprises 1049 residues: ABC transporter ATM1 (1049 aa).

The N-terminal 90 residues, M1–Y90, are a transit peptide targeting the mitochondrion. 6 helical membrane-spanning segments follow: residues I357–L377, I397–S419, V481–T501, Y506–I526, F591–T611, and I619–L639. Residues S360 to L651 enclose the ABC transmembrane type-1 domain. The 237-residue stretch at L807–S1043 folds into the ABC transporter domain. Residue G843–S850 participates in ATP binding.

This sequence belongs to the ABC transporter superfamily. ABCB family. Heavy Metal importer (TC 3.A.1.210) subfamily. In terms of assembly, homodimer. Interacts with ISCU. Interacts with IscA2. Interacts with NBP35. Interacts with mHCF101.

It is found in the mitochondrion membrane. With respect to regulation, ATPase activity is stimulated by reduced glutathione. Functionally, transports glutathione-coordinated [4Fe-4S] iron-sulfur clusters in an ATP-dependent manner. Required for optimal parasite growth during erythrocytic stages. The chain is ABC transporter ATM1 from Plasmodium falciparum (isolate 3D7).